Consider the following 102-residue polypeptide: ATP-dependent Clp protease adapter protein ClpS (102 aa).

It belongs to the ClpS family. As to quaternary structure, binds to the N-terminal domain of the chaperone ClpA.

Functionally, involved in the modulation of the specificity of the ClpAP-mediated ATP-dependent protein degradation. This Shewanella frigidimarina (strain NCIMB 400) protein is ATP-dependent Clp protease adapter protein ClpS.